The primary structure comprises 965 residues: Phosphoenolpyruvate carboxylase (965 aa).

Phosphoserine is present on Ser-11. Active-site residues include His-173 and Lys-601.

This sequence belongs to the PEPCase type 1 family. In terms of assembly, homotetramer. The cofactor is Mg(2+).

It is found in the cytoplasm. The enzyme catalyses oxaloacetate + phosphate = phosphoenolpyruvate + hydrogencarbonate. It participates in photosynthesis; C3 acid pathway. Its activity is regulated as follows. By light-reversible phosphorylation. Its function is as follows. Through the carboxylation of phosphoenolpyruvate (PEP) it forms oxaloacetate, a four-carbon dicarboxylic acid source for the tricarboxylic acid cycle. The protein is Phosphoenolpyruvate carboxylase (PPC1) of Solanum tuberosum (Potato).